The primary structure comprises 283 residues: 4-diphosphocytidyl-2-C-methyl-D-erythritol kinase (283 aa).

K10 is a catalytic residue. 99 to 109 (PMGGGLGGGSS) provides a ligand contact to ATP. D141 is an active-site residue.

The protein belongs to the GHMP kinase family. IspE subfamily. As to quaternary structure, homodimer.

The catalysed reaction is 4-CDP-2-C-methyl-D-erythritol + ATP = 4-CDP-2-C-methyl-D-erythritol 2-phosphate + ADP + H(+). Its pathway is isoprenoid biosynthesis; isopentenyl diphosphate biosynthesis via DXP pathway; isopentenyl diphosphate from 1-deoxy-D-xylulose 5-phosphate: step 3/6. Functionally, catalyzes the phosphorylation of the position 2 hydroxy group of 4-diphosphocytidyl-2C-methyl-D-erythritol. The polypeptide is 4-diphosphocytidyl-2-C-methyl-D-erythritol kinase (Salmonella typhi).